The following is a 524-amino-acid chain: Light-independent protochlorophyllide reductase subunit B (524 aa).

Position 36 (Asp36) interacts with [4Fe-4S] cluster. Residue Asp290 is the Proton donor of the active site. 425 to 426 (GL) is a substrate binding site.

It belongs to the ChlB/BchB/BchZ family. As to quaternary structure, protochlorophyllide reductase is composed of three subunits; ChlL, ChlN and ChlB. Forms a heterotetramer of two ChlB and two ChlN subunits. [4Fe-4S] cluster serves as cofactor.

The catalysed reaction is chlorophyllide a + oxidized 2[4Fe-4S]-[ferredoxin] + 2 ADP + 2 phosphate = protochlorophyllide a + reduced 2[4Fe-4S]-[ferredoxin] + 2 ATP + 2 H2O. Its pathway is porphyrin-containing compound metabolism; chlorophyll biosynthesis (light-independent). Component of the dark-operative protochlorophyllide reductase (DPOR) that uses Mg-ATP and reduced ferredoxin to reduce ring D of protochlorophyllide (Pchlide) to form chlorophyllide a (Chlide). This reaction is light-independent. The NB-protein (ChlN-ChlB) is the catalytic component of the complex. The chain is Light-independent protochlorophyllide reductase subunit B from Parasynechococcus marenigrum (strain WH8102).